A 178-amino-acid polypeptide reads, in one-letter code: Gamma-crystallin S (178 aa).

Serine 2 is modified (N-acetylserine). An N-terminal arm region spans residues 2-5 (SKSV). Beta/gamma crystallin 'Greek key' domains are found at residues 6 to 44 (AKIT…RVTG) and 45 to 87 (GAWV…KVIH). Positions 88–93 (LSSGGQ) are connecting peptide. Beta/gamma crystallin 'Greek key' domains follow at residues 94-134 (YKLQ…KVLD) and 135-177 (GVWV…RRIM).

Belongs to the beta/gamma-crystallin family. In terms of assembly, monomer.

Functionally, crystallins are the dominant structural components of the vertebrate eye lens. The sequence is that of Gamma-crystallin S (CRYGS) from Macropus fuliginosus (Western gray kangaroo).